The primary structure comprises 49 residues: Large ribosomal subunit protein bL33 (49 aa).

Belongs to the bacterial ribosomal protein bL33 family.

The protein is Large ribosomal subunit protein bL33 of Syntrophobacter fumaroxidans (strain DSM 10017 / MPOB).